The following is a 464-amino-acid chain: Rhodopsin (464 aa).

Over 1 to 33 the chain is Extracellular; it reads MGRDIPDNETWWYNPTMEVHPHWKQFNQVPDAV. Asn8 carries N-linked (GlcNAc...) asparagine glycosylation. The chain crosses the membrane as a helical span at residues 34 to 58; the sequence is YYSLGIFIGICGIIGCTGNGIVIYL. Residues 59–70 are Cytoplasmic-facing; sequence FTKTKSLQTPAN. Residues 71–97 form a helical membrane-spanning segment; that stretch reads MFIINLAFSDFTFSLVNGFPLMTISCF. At 98–109 the chain is on the extracellular side; sequence IKKWVFGMAACK. Cysteines 108 and 186 form a disulfide. A helical transmembrane segment spans residues 110 to 131; the sequence is VYGFIGGIFGLMSIMTMSMISI. The 'Ionic lock' involved in activated form stabilization motif lies at 132-134; sequence DRY. Topologically, residues 132–151 are cytoplasmic; sequence DRYNVIGRPMAASKKMSHRR. The helical transmembrane segment at 152-172 threads the bilayer; sequence AFLMIIFVWMWSTLWSIGPIF. The Extracellular segment spans residues 173 to 199; the sequence is GWGAYVLEGVLCNCSFDYITRDSATRS. The helical transmembrane segment at 200–224 threads the bilayer; the sequence is NIVCMYIFAFCFPILIIFFCYFNIV. Residues 225–261 are Cytoplasmic-facing; that stretch reads MAVSNHEKEMAAMAKRLNAKELRKAQAGASAEMKLAK. The chain crosses the membrane as a helical span at residues 262–283; that stretch reads ISIVIVTQFLLSWSPYAVVALL. Topologically, residues 284-293 are extracellular; it reads AQFGPIEWVT. Residues 294–315 form a helical membrane-spanning segment; that stretch reads PYAAQLPVMFAKASAIHNPLIY. Lys305 carries the N6-(retinylidene)lysine modification. Over 316 to 464 the chain is Cytoplasmic; it reads SVSHPKFREA…QGVDNQAYQA (149 aa). 2 S-palmitoyl cysteine lipidation sites follow: Cys336 and Cys337. Residues 344 to 464 are disordered; sequence VEDDKDAETE…QGVDNQAYQA (121 aa). The segment covering 367–401 has biased composition (low complexity); the sequence is AAQMKEMMAMMQKMQQQQAAYPPQGAYPPQGGYPP. Composition is skewed to pro residues over residues 416 to 425 and 434 to 452; these read QGYPPPPQGY and QGYP…PQAA.

This sequence belongs to the G-protein coupled receptor 1 family. Opsin subfamily. Post-translationally, contains one covalently linked retinal chromophore. Upon light absorption, the covalently bound 11-cis-retinal is converted to all-trans-retinal. After hydrolysis of the Schiff base and release of the covalently bound all-trans-retinal, active rhodopsin is regenerated by binding of a fresh molecule of 11-cis-retinal.

It is found in the cell projection. It localises to the rhabdomere membrane. Its function is as follows. Photoreceptor required for image-forming vision at low light intensity. Light-induced isomerization of 11-cis to all-trans retinal triggers a conformational change that activates signaling via G-proteins. Signaling mediates the activation of phospholipase C. Subsequent receptor phosphorylation mediates displacement of the bound G-protein alpha subunit by arrestin and terminates signaling. The protein is Rhodopsin (RHO) of Sepia officinalis (Common cuttlefish).